Here is a 344-residue protein sequence, read N- to C-terminus: Endo-1,4-beta-xylanase UM03411 (344 aa).

The first 21 residues, 1–21 (MKTNFLVLLSALLAASSAVTA), serve as a signal peptide directing secretion. Residues 35–338 (QRAGSSLNAA…KPAYNAVLST (304 aa)) enclose the GH10 domain. Glu166 acts as the Proton donor in catalysis. N-linked (GlcNAc...) asparagine glycosylation is present at Asn171. The active-site Nucleophile is the Glu275. A disulfide bond links Cys293 and Cys299. Residues Asn310 and Asn323 are each glycosylated (N-linked (GlcNAc...) asparagine).

Belongs to the glycosyl hydrolase 10 (cellulase F) family.

It is found in the secreted. The enzyme catalyses Endohydrolysis of (1-&gt;4)-beta-D-xylosidic linkages in xylans.. The protein operates within glycan degradation; xylan degradation. Endo-1,4-beta-xylanase involved in the hydrolysis of xylan, a major structural heterogeneous polysaccharide found in plant biomass representing the second most abundant polysaccharide in the biosphere, after cellulose. The chain is Endo-1,4-beta-xylanase UM03411 from Mycosarcoma maydis (Corn smut fungus).